We begin with the raw amino-acid sequence, 691 residues long: Threonine--tRNA ligase (691 aa).

The tract at residues 1 to 22 is disordered; it reads MSVPAQPAPGADGGDPRQPIRV. The region spanning 1 to 73 is the TGS domain; the sequence is MSVPAQPAPG…DADAEVTPIA (73 aa). Residues 268–574 form a catalytic region; it reads DHRKLGVELD…LTEHYAGAFP (307 aa). Zn(2+) is bound by residues cysteine 373, histidine 424, and histidine 551.

The protein belongs to the class-II aminoacyl-tRNA synthetase family. As to quaternary structure, homodimer. Zn(2+) serves as cofactor.

The protein resides in the cytoplasm. It catalyses the reaction tRNA(Thr) + L-threonine + ATP = L-threonyl-tRNA(Thr) + AMP + diphosphate + H(+). Its function is as follows. Catalyzes the attachment of threonine to tRNA(Thr) in a two-step reaction: L-threonine is first activated by ATP to form Thr-AMP and then transferred to the acceptor end of tRNA(Thr). Also edits incorrectly charged L-seryl-tRNA(Thr). The polypeptide is Threonine--tRNA ligase (Mycobacterium marinum (strain ATCC BAA-535 / M)).